The sequence spans 137 residues: MRNWRQAENIRLYIAVGCGAAIGALLRFLSGWVIVAILGANPLWGTSFVNIVGSFIIMFFATLTGPEGRWLVSPAWRQFVMGGLCGGLTTFSSMSLDTFLLVLHGNAAFALAYLCGLVFLSLSAAMLGLIAAQRINR.

Helical transmembrane passes span 20–40, 43–63, 83–103, and 110–130; these read AAIGALLRFLSGWVIVAILGA, LWGTSFVNIVGSFIIMFFATL, GLCGGLTTFSSMSLDTFLLVL, and ALAYLCGLVFLSLSAAMLGLI. The Na(+) site is built by Gly86 and Thr89.

Belongs to the fluoride channel Fluc/FEX (TC 1.A.43) family.

It is found in the cell inner membrane. The catalysed reaction is fluoride(in) = fluoride(out). Its activity is regulated as follows. Na(+) is not transported, but it plays an essential structural role and its presence is essential for fluoride channel function. Its function is as follows. Fluoride-specific ion channel. Important for reducing fluoride concentration in the cell, thus reducing its toxicity. In Brucella suis biovar 1 (strain 1330), this protein is Fluoride-specific ion channel FluC 4.